The sequence spans 505 residues: Maturase K (505 aa).

This sequence belongs to the intron maturase 2 family. MatK subfamily.

It is found in the plastid. The protein resides in the chloroplast. In terms of biological role, usually encoded in the trnK tRNA gene intron. Probably assists in splicing its own and other chloroplast group II introns. The polypeptide is Maturase K (Sciadopitys verticillata (Japanese umbrella-pine)).